A 701-amino-acid polypeptide reads, in one-letter code: Elongation factor G (701 aa).

The region spanning Glu-8–Val-286 is the tr-type G domain. GTP-binding positions include Ala-17–Thr-24, Asp-85–His-89, and Asn-139–Asp-142.

Belongs to the TRAFAC class translation factor GTPase superfamily. Classic translation factor GTPase family. EF-G/EF-2 subfamily.

Its subcellular location is the cytoplasm. Catalyzes the GTP-dependent ribosomal translocation step during translation elongation. During this step, the ribosome changes from the pre-translocational (PRE) to the post-translocational (POST) state as the newly formed A-site-bound peptidyl-tRNA and P-site-bound deacylated tRNA move to the P and E sites, respectively. Catalyzes the coordinated movement of the two tRNA molecules, the mRNA and conformational changes in the ribosome. The chain is Elongation factor G from Roseiflexus sp. (strain RS-1).